The primary structure comprises 120 residues: Small ribosomal subunit protein eS24 (120 aa).

The tract at residues Arg-101–Gly-120 is disordered.

Belongs to the eukaryotic ribosomal protein eS24 family.

The polypeptide is Small ribosomal subunit protein eS24 (Saccharolobus islandicus (strain M.16.27) (Sulfolobus islandicus)).